A 451-amino-acid chain; its full sequence is Uronate isomerase (451 aa).

It belongs to the metallo-dependent hydrolases superfamily. Uronate isomerase family.

The catalysed reaction is D-glucuronate = D-fructuronate. It catalyses the reaction aldehydo-D-galacturonate = keto-D-tagaturonate. It participates in carbohydrate metabolism; pentose and glucuronate interconversion. The polypeptide is Uronate isomerase (Thermotoga petrophila (strain ATCC BAA-488 / DSM 13995 / JCM 10881 / RKU-1)).